Reading from the N-terminus, the 77-residue chain is Acyl carrier protein (77 aa).

The 76-residue stretch at 2-77 folds into the Carrier domain; the sequence is SDVADRVKKI…DAVKFISEAS (76 aa). S37 is modified (O-(pantetheine 4'-phosphoryl)serine).

This sequence belongs to the acyl carrier protein (ACP) family. 4'-phosphopantetheine is transferred from CoA to a specific serine of apo-ACP by AcpS. This modification is essential for activity because fatty acids are bound in thioester linkage to the sulfhydryl of the prosthetic group.

The protein localises to the cytoplasm. Its pathway is lipid metabolism; fatty acid biosynthesis. Functionally, carrier of the growing fatty acid chain in fatty acid biosynthesis. The chain is Acyl carrier protein from Ruegeria pomeroyi (strain ATCC 700808 / DSM 15171 / DSS-3) (Silicibacter pomeroyi).